The sequence spans 498 residues: Flagellin (498 aa).

It belongs to the bacterial flagellin family.

It is found in the secreted. Its subcellular location is the bacterial flagellum. Flagellin is the subunit protein which polymerizes to form the filaments of bacterial flagella. This is Flagellin (fliC) from Escherichia coli (strain K12).